We begin with the raw amino-acid sequence, 154 residues long: Periplasmic nitrate reductase, electron transfer subunit (154 aa).

The N-terminal stretch at 1-24 is a signal peptide; it reads MSMHPALRLLATVLVALGAGPAFT. The tract at residues 27–47 is disordered; sequence APRLTGADRPMSEVAAPPLPE. Heme c is bound by residues His68, Cys82, Cys85, His86, His103, Cys122, Cys125, and His126.

The protein belongs to the NapB family. In terms of assembly, component of the periplasmic nitrate reductase NapAB complex composed of NapA and NapB. Binds 2 heme C groups per subunit.

The protein localises to the periplasm. Its function is as follows. Electron transfer subunit of the periplasmic nitrate reductase complex NapAB. Receives electrons from the membrane-anchored tetraheme c-type NapC protein and transfers these to NapA subunit, thus allowing electron flow between membrane and periplasm. Essential for periplasmic nitrate reduction with nitrate as the terminal electron acceptor. The polypeptide is Periplasmic nitrate reductase, electron transfer subunit (Cereibacter sphaeroides (Rhodobacter sphaeroides)).